Reading from the N-terminus, the 619-residue chain is Long-chain fatty acid transport protein 6 (619 aa).

2 helical membrane-spanning segments follow: residues 22-42 (LLFP…RYGI) and 119-139 (VHVW…NSNL). AMP is bound at residue 221–232 (YIFTSGTTGLPK).

This sequence belongs to the ATP-dependent AMP-binding enzyme family.

It localises to the cell membrane. Its subcellular location is the sarcolemma. The enzyme catalyses a fatty acid(in) = a fatty acid(out). It catalyses the reaction hexadecanoate(out) = hexadecanoate(in). The catalysed reaction is (9Z,12Z)-octadecadienoate(out) = (9Z,12Z)-octadecadienoate(in). It carries out the reaction (9Z)-octadecenoate(out) = (9Z)-octadecenoate(in). The enzyme catalyses a very long-chain fatty acid + ATP + CoA = a very long-chain fatty acyl-CoA + AMP + diphosphate. It catalyses the reaction tetracosanoate + ATP + CoA = tetracosanoyl-CoA + AMP + diphosphate. The catalysed reaction is a long-chain fatty acid + ATP + CoA = a long-chain fatty acyl-CoA + AMP + diphosphate. It carries out the reaction (9Z)-octadecenoate + ATP + CoA = (9Z)-octadecenoyl-CoA + AMP + diphosphate. The enzyme catalyses (5Z,8Z,11Z,14Z)-eicosatetraenoate + ATP + CoA = (5Z,8Z,11Z,14Z)-eicosatetraenoyl-CoA + AMP + diphosphate. Mediates the import of long-chain fatty acids (LCFA) into the cell by facilitating their transport at the plasma membrane. Also functions as an acyl-CoA ligase catalyzing the ATP-dependent formation of fatty acyl-CoA using LCFA and very-long-chain fatty acids (VLCFA) as substrates. Plays a pivotal role in regulating available LCFA substrates from exogenous sources in tissues undergoing high levels of beta-oxidation such as the heart. The protein is Long-chain fatty acid transport protein 6 (Slc27a6) of Mus musculus (Mouse).